The primary structure comprises 554 residues: HMG box-containing protein 4 (554 aa).

Disordered regions lie at residues 15–368 (GTED…AYQV) and 417–469 (HKQN…PAKV). A compositionally biased stretch (basic and acidic residues) spans 75–88 (SSDDYHADHSTDSA). Residues 95–105 (SLPSPSSSDTA) are compositionally biased toward low complexity. The segment covering 113–123 (TSPQADTSTTH) has biased composition (polar residues). Basic and acidic residues-rich tracts occupy residues 145–154 (PHKDYHKKSG) and 217–226 (LGREEIESRS). Residues 236–251 (YTPRSGGTPDSASSTG) show a composition bias toward polar residues. Positions 268–296 (MKKKKKSKKSKKKKDKHKDEKHKKHSKSK) are enriched in basic residues. The segment covering 313–332 (LPSPPPPPATTPPTSPPSIP) has biased composition (pro residues). Positions 341 to 357 (HTEEQSDKKKKKEDPEK) are enriched in basic and acidic residues. The segment at residues 359-427 (KKKNMSAYQV…KQNKAEATTV (69 aa)) is a DNA-binding region (HMG box). 2 stretches are compositionally biased toward low complexity: residues 433–445 (SSES…GSSS) and 454–467 (SPTS…TSPA).

As to quaternary structure, interacts with nlk.2.

It localises to the nucleus. Its function is as follows. Negatively regulates Wnt/beta-catenin signaling during development. The chain is HMG box-containing protein 4 (hmgxb4) from Xenopus laevis (African clawed frog).